Reading from the N-terminus, the 93-residue chain is MAEENVIYVGNKPVTNYVLAVMTQFSEGADEVKLVARGRAISRAVDVAEFIRNNVMPEVEVKDIEIGTEEIETEEGDTISVSTIAITLAKPSE.

This sequence belongs to the histone-like Alba family.

The protein localises to the cytoplasm. Its subcellular location is the chromosome. In terms of biological role, binds double-stranded DNA tightly but without sequence specificity. Involved in DNA compaction. This Methanopyrus kandleri (strain AV19 / DSM 6324 / JCM 9639 / NBRC 100938) protein is DNA/RNA-binding protein Alba 2.